The following is a 220-amino-acid chain: Glutamine amidotransferase-like class 1 domain-containing protein 1 (220 aa).

A signal peptide spans methionine 1–alanine 38. Asparagine 201 carries N-linked (GlcNAc...) asparagine glycosylation.

The protein belongs to the peptidase C56 family. Homotetramer. Component of the FERRY complex composed of five subunits, TBCK, PPP1R21, FERRY3, CRYZL1 and GATD1 with a ratio of 1:2:1:2:4, respectively.

It localises to the secreted. The protein resides in the early endosome. In terms of biological role, component of the FERRY complex (Five-subunit Endosomal Rab5 and RNA/ribosome intermediary). The FERRY complex directly interacts with mRNAs and RAB5A, and functions as a RAB5A effector involved in the localization and the distribution of specific mRNAs most likely by mediating their endosomal transport. The complex recruits mRNAs and ribosomes to early endosomes through direct mRNA-interaction. In Homo sapiens (Human), this protein is Glutamine amidotransferase-like class 1 domain-containing protein 1.